A 254-amino-acid chain; its full sequence is Sulfoacetaldehyde reductase (254 aa).

Position 8–32 (8–32 (FITGATSGFGEAAAQVFADAGWSLV)) interacts with NADP(+). A substrate-binding site is contributed by Ser-141. The active-site Proton acceptor is the Tyr-154.

This sequence belongs to the short-chain dehydrogenases/reductases (SDR) family. Homodimer and heterotetramer.

It catalyses the reaction 2-hydroxyethane-1-sulfonate + NADP(+) = sulfoacetaldehyde + NADPH + H(+). The protein operates within organosulfur degradation. Functionally, catalyzes the formation of isethionate from 2-sulfoacetaldehyde in the deaminative pathway of taurine. The enzyme is specific for NADPH; NADH is not a substrate. This chain is Sulfoacetaldehyde reductase (isfD), found in Klebsiella oxytoca.